The chain runs to 562 residues: uncharacterized protein (562 aa).

Transmembrane regions (helical) follow at residues 15–34, 41–63, 78–97, 104–126, and 165–187; these read WGGGVAHSVLILSLVIAFGI, VAGISLGVTWILFVGIVFGHFNL, LILFVYSIGLQVGPGFFSAF, LNMLAMIVVFAGVIITLALHFIT, and IALGYAVAYPLGVVGCIMSLLGL. RCK C-terminal domains lie at 204–286 and 289–374; these read QGLG…ITAF and KPIE…VLGN. 6 consecutive transmembrane segments (helical) span residues 384 to 403, 413 to 430, 450 to 472, 476 to 498, 505 to 524, and 539 to 561; these read LIPIFLGIALGCILGSIPFM, LGLAGGPLIVSILISRFG, IGISLFLACVGLGAGDGFVETII, GYVWIAYGMIITIVPLLLAGFIG, NYYTLIGVLAGSTTNPPALA, and YATVYPLTMFLRVLTAQLLILSL.

Belongs to the AAE transporter (TC 2.A.81) family.

The protein localises to the cell membrane. This is an uncharacterized protein from Bacteroides fragilis (strain YCH46).